Reading from the N-terminus, the 229-residue chain is Ribonuclease 3 (229 aa).

An RNase III domain is found at 5-127 (LDRLERKLGY…LIGAIYQDAD (123 aa)). Mg(2+) is bound at residue Glu-40. Asp-44 is an active-site residue. Residues Asp-113 and Glu-116 each coordinate Mg(2+). Residue Glu-116 is part of the active site. Residues 154–224 (DPKTRLQEFL…AAAALIALGV (71 aa)) form the DRBM domain.

This sequence belongs to the ribonuclease III family. As to quaternary structure, homodimer. Mg(2+) serves as cofactor.

It localises to the cytoplasm. The enzyme catalyses Endonucleolytic cleavage to 5'-phosphomonoester.. Functionally, digests double-stranded RNA. Involved in the processing of primary rRNA transcript to yield the immediate precursors to the large and small rRNAs (23S and 16S). Processes some mRNAs, and tRNAs when they are encoded in the rRNA operon. Processes pre-crRNA and tracrRNA of type II CRISPR loci if present in the organism. This chain is Ribonuclease 3, found in Pseudomonas entomophila (strain L48).